The following is a 591-amino-acid chain: Aspartate--tRNA ligase (591 aa).

E172 serves as a coordination point for L-aspartate. Residues 196-199 are aspartate; that stretch reads QLFK. R218 contacts L-aspartate. Residues 218–220 and Q227 contribute to the ATP site; that span reads RDE. H449 lines the L-aspartate pocket. An ATP-binding site is contributed by E483. R490 contacts L-aspartate. Residue 535–538 coordinates ATP; it reads GLDR.

The protein belongs to the class-II aminoacyl-tRNA synthetase family. Type 1 subfamily. As to quaternary structure, homodimer.

It is found in the cytoplasm. It catalyses the reaction tRNA(Asp) + L-aspartate + ATP = L-aspartyl-tRNA(Asp) + AMP + diphosphate. Catalyzes the attachment of L-aspartate to tRNA(Asp) in a two-step reaction: L-aspartate is first activated by ATP to form Asp-AMP and then transferred to the acceptor end of tRNA(Asp). This is Aspartate--tRNA ligase from Actinobacillus pleuropneumoniae serotype 5b (strain L20).